A 330-amino-acid polypeptide reads, in one-letter code: Aspartate--ammonia ligase (330 aa).

It belongs to the class-II aminoacyl-tRNA synthetase family. AsnA subfamily.

It is found in the cytoplasm. It catalyses the reaction L-aspartate + NH4(+) + ATP = L-asparagine + AMP + diphosphate + H(+). It participates in amino-acid biosynthesis; L-asparagine biosynthesis; L-asparagine from L-aspartate (ammonia route): step 1/1. The sequence is that of Aspartate--ammonia ligase from Salmonella agona (strain SL483).